The following is a 367-amino-acid chain: uncharacterized protein (367 aa).

To M.tuberculosis Rv0502.

This is an uncharacterized protein from Mycobacterium leprae (strain TN).